A 216-amino-acid chain; its full sequence is Phosphoenolpyruvate guanylyltransferase (216 aa).

Phosphoenolpyruvate is bound by residues T139, G155, and S158.

The protein belongs to the CofC family.

It catalyses the reaction phosphoenolpyruvate + GTP + H(+) = enolpyruvoyl-2-diphospho-5'-guanosine + diphosphate. It participates in cofactor biosynthesis; coenzyme F420 biosynthesis. Its function is as follows. Guanylyltransferase that catalyzes the activation of phosphoenolpyruvate (PEP) as enolpyruvoyl-2-diphospho-5'-guanosine, via the condensation of PEP with GTP. It is involved in the biosynthesis of coenzyme F420, a hydride carrier cofactor. The polypeptide is Phosphoenolpyruvate guanylyltransferase (Streptomyces avermitilis (strain ATCC 31267 / DSM 46492 / JCM 5070 / NBRC 14893 / NCIMB 12804 / NRRL 8165 / MA-4680)).